Here is a 204-residue protein sequence, read N- to C-terminus: Wound-induced proteinase inhibitor 2 (204 aa).

Positions 1-25 (MAVPKEVSFLASLLVLGILLLHVDA) are cleaved as a signal peptide. A run of 3 repeats spans residues 25-67 (AKAC…DPNN), 68-125 (PKPC…DPNN), and 126-183 (PKPC…DPNH). Disulfide bonds link cysteine 28–cysteine 100, cysteine 38–cysteine 75, cysteine 41–cysteine 59, cysteine 42–cysteine 71, cysteine 48–cysteine 84, and cysteine 99–cysteine 117. The 4; truncated repeat unit spans residues 184–204 (PKACPKNCDPNIAYSLCLYEK).

This sequence belongs to the protease inhibitor I20 (potato type II proteinase inhibitor) family.

The chain is Wound-induced proteinase inhibitor 2 (PIN2) from Capsicum annuum (Capsicum pepper).